A 204-amino-acid chain; its full sequence is Peptide deformylase (204 aa).

2 residues coordinate Fe cation: Cys131 and His174. The active site involves Glu175. His178 lines the Fe cation pocket.

Belongs to the polypeptide deformylase family. The cofactor is Fe(2+).

It carries out the reaction N-terminal N-formyl-L-methionyl-[peptide] + H2O = N-terminal L-methionyl-[peptide] + formate. In terms of biological role, removes the formyl group from the N-terminal Met of newly synthesized proteins. Requires at least a dipeptide for an efficient rate of reaction. N-terminal L-methionine is a prerequisite for activity but the enzyme has broad specificity at other positions. The chain is Peptide deformylase from Streptococcus thermophilus (strain CNRZ 1066).